Here is a 264-residue protein sequence, read N- to C-terminus: Fructose-1,6-bisphosphatase/inositol-1-monophosphatase (264 aa).

Mg(2+) contacts are provided by Glu70, Asp86, Leu88, and Asp89. Substrate is bound by residues 89–91, Arg185, and Ala190; that span reads DGT. Mg(2+) is bound at residue Asp214.

This sequence belongs to the inositol monophosphatase superfamily. FBPase class 4 family. It depends on Mg(2+) as a cofactor.

The catalysed reaction is beta-D-fructose 1,6-bisphosphate + H2O = beta-D-fructose 6-phosphate + phosphate. It carries out the reaction a myo-inositol phosphate + H2O = myo-inositol + phosphate. Its function is as follows. Phosphatase with broad specificity; it can dephosphorylate fructose 1,6-bisphosphate, and both D and L isomers of inositol-1-phosphate (I-1-P). This Aquifex aeolicus (strain VF5) protein is Fructose-1,6-bisphosphatase/inositol-1-monophosphatase (suhB).